A 360-amino-acid chain; its full sequence is Phospho-N-acetylmuramoyl-pentapeptide-transferase (360 aa).

Transmembrane regions (helical) follow at residues 26–46, 74–94, 97–117, 134–154, 168–188, 199–219, 236–256, 263–283, 288–308, and 338–358; these read AILG…KLIE, MGGL…GDLG, YVWV…IDDY, YILQ…TAAN, VMPQ…VGSS, GLAI…AYLS, SGEL…FLWF, VFMG…IAVL, ILLV…ILQV, and VIVR…ATLK.

This sequence belongs to the glycosyltransferase 4 family. MraY subfamily. Requires Mg(2+) as cofactor.

The protein resides in the cell inner membrane. It carries out the reaction UDP-N-acetyl-alpha-D-muramoyl-L-alanyl-gamma-D-glutamyl-meso-2,6-diaminopimeloyl-D-alanyl-D-alanine + di-trans,octa-cis-undecaprenyl phosphate = di-trans,octa-cis-undecaprenyl diphospho-N-acetyl-alpha-D-muramoyl-L-alanyl-D-glutamyl-meso-2,6-diaminopimeloyl-D-alanyl-D-alanine + UMP. The protein operates within cell wall biogenesis; peptidoglycan biosynthesis. Its function is as follows. Catalyzes the initial step of the lipid cycle reactions in the biosynthesis of the cell wall peptidoglycan: transfers peptidoglycan precursor phospho-MurNAc-pentapeptide from UDP-MurNAc-pentapeptide onto the lipid carrier undecaprenyl phosphate, yielding undecaprenyl-pyrophosphoryl-MurNAc-pentapeptide, known as lipid I. This chain is Phospho-N-acetylmuramoyl-pentapeptide-transferase, found in Shewanella putrefaciens (strain CN-32 / ATCC BAA-453).